The following is an 89-amino-acid chain: Acyl-CoA-binding protein (89 aa).

One can recognise an ACB domain in the interval 3-88; it reads LKEEFEEHAE…VKQLFEAAGS (86 aa). An acyl-CoA contacts are provided by residues 30–34, K56, and Y75; that span reads YGLYK.

Belongs to the ACBP family.

In terms of biological role, binds medium- and long-chain acyl-CoA esters with very high affinity and may function as an intracellular carrier of acyl-CoA esters. This chain is Acyl-CoA-binding protein, found in Gossypium hirsutum (Upland cotton).